Here is a 23-residue protein sequence, read N- to C-terminus: Hemocyanin subunit 4 (23 aa).

It belongs to the tyrosinase family. Hemocyanin subfamily. In terms of tissue distribution, hemolymph.

The protein localises to the secreted. It is found in the extracellular space. Functionally, hemocyanins are copper-containing oxygen carriers occurring freely dissolved in the hemolymph of many mollusks and arthropods. The polypeptide is Hemocyanin subunit 4 (Carcinus maenas (Common shore crab)).